Consider the following 495-residue polypeptide: Angiopoietin-2 (495 aa).

Residues 1–18 form the signal peptide; sequence MWQIVFFTLSCDLVRAAA. Asn-88, Asn-118, Asn-132, Asn-150, Asn-239, and Asn-303 each carry an N-linked (GlcNAc...) asparagine glycan. Residues 165-247 are a coiled coil; the sequence is STNKLEKQIL…VNNSVLQKQQ (83 aa). Positions 274 to 494 constitute a Fibrinogen C-terminal domain; sequence KEEQIIYRDC…GTTMMIRPAD (221 aa). Cys-283 and Cys-312 are joined by a disulfide. Residues Asp-428, Asp-430, Cys-432, and Cys-434 each coordinate Ca(2+). 2 disulfides stabilise this stretch: Cys-432–Cys-434 and Cys-436–Cys-449.

In terms of assembly, interacts with TEK/TIE2, competing for the same binding site as ANGPT1. Interacts with ITGA5. Interacts with SVEP1/polydom. Interacts with THBD; this interaction significantly inhibits the generation of activated PC and TAFIa/CPB2 by the thrombin/thrombomodulin complex.

The protein localises to the secreted. Binds to TEK/TIE2, competing for the ANGPT1 binding site, and modulating ANGPT1 signaling. Can induce tyrosine phosphorylation of TEK/TIE2 in the absence of ANGPT1. In the absence of angiogenic inducers, such as VEGF, ANGPT2-mediated loosening of cell-matrix contacts may induce endothelial cell apoptosis with consequent vascular regression. In concert with VEGF, it may facilitate endothelial cell migration and proliferation, thus serving as a permissive angiogenic signal. Involved in the regulation of lymphangiogenesis. The polypeptide is Angiopoietin-2 (ANGPT2) (Canis lupus familiaris (Dog)).